A 631-amino-acid chain; its full sequence is Chaperone protein DnaK (631 aa).

Thr198 bears the Phosphothreonine; by autocatalysis mark. Residues 602 to 631 (EAAGGAQQAGKDDVVDAEFTEVDDDKKKSA) form a disordered region.

The protein belongs to the heat shock protein 70 family.

In terms of biological role, acts as a chaperone. The polypeptide is Chaperone protein DnaK (Rhodopseudomonas palustris (strain ATCC BAA-98 / CGA009)).